A 126-amino-acid chain; its full sequence is Phosphoribosyl-AMP cyclohydrolase (126 aa).

Asp76 provides a ligand contact to Mg(2+). Cys77 is a binding site for Zn(2+). 2 residues coordinate Mg(2+): Asp78 and Asp80. 2 residues coordinate Zn(2+): Cys94 and Cys101.

The protein belongs to the PRA-CH family. Homodimer. The cofactor is Mg(2+). Zn(2+) serves as cofactor.

Its subcellular location is the cytoplasm. The enzyme catalyses 1-(5-phospho-beta-D-ribosyl)-5'-AMP + H2O = 1-(5-phospho-beta-D-ribosyl)-5-[(5-phospho-beta-D-ribosylamino)methylideneamino]imidazole-4-carboxamide. Its pathway is amino-acid biosynthesis; L-histidine biosynthesis; L-histidine from 5-phospho-alpha-D-ribose 1-diphosphate: step 3/9. In terms of biological role, catalyzes the hydrolysis of the adenine ring of phosphoribosyl-AMP. The chain is Phosphoribosyl-AMP cyclohydrolase from Nitratidesulfovibrio vulgaris (strain ATCC 29579 / DSM 644 / CCUG 34227 / NCIMB 8303 / VKM B-1760 / Hildenborough) (Desulfovibrio vulgaris).